The primary structure comprises 249 residues: Ubiquinone/menaquinone biosynthesis C-methyltransferase UbiE (249 aa).

S-adenosyl-L-methionine is bound by residues threonine 72, aspartate 93, and 121–122; that span reads NA.

Belongs to the class I-like SAM-binding methyltransferase superfamily. MenG/UbiE family.

The catalysed reaction is a 2-demethylmenaquinol + S-adenosyl-L-methionine = a menaquinol + S-adenosyl-L-homocysteine + H(+). It carries out the reaction a 2-methoxy-6-(all-trans-polyprenyl)benzene-1,4-diol + S-adenosyl-L-methionine = a 5-methoxy-2-methyl-3-(all-trans-polyprenyl)benzene-1,4-diol + S-adenosyl-L-homocysteine + H(+). It participates in quinol/quinone metabolism; menaquinone biosynthesis; menaquinol from 1,4-dihydroxy-2-naphthoate: step 2/2. It functions in the pathway cofactor biosynthesis; ubiquinone biosynthesis. Methyltransferase required for the conversion of demethylmenaquinol (DMKH2) to menaquinol (MKH2) and the conversion of 2-polyprenyl-6-methoxy-1,4-benzoquinol (DDMQH2) to 2-polyprenyl-3-methyl-6-methoxy-1,4-benzoquinol (DMQH2). The protein is Ubiquinone/menaquinone biosynthesis C-methyltransferase UbiE of Hahella chejuensis (strain KCTC 2396).